Consider the following 83-residue polypeptide: Cardiotoxin 7'' (83 aa).

A signal peptide spans 1 to 21 (MKTLLLTLVVVTIVCLDLGYT). 4 disulfides stabilise this stretch: C24/C43, C36/C61, C65/C76, and C77/C82.

This sequence belongs to the three-finger toxin family. Short-chain subfamily. Orphan group XV sub-subfamily. As to expression, expressed by the venom gland.

Its subcellular location is the secreted. The protein localises to the target cell membrane. Has low cytotoxic activity. In Naja atra (Chinese cobra), this protein is Cardiotoxin 7''.